A 208-amino-acid polypeptide reads, in one-letter code: 2-phospho-L-lactate guanylyltransferase (208 aa).

Belongs to the CofC family. As to quaternary structure, homodimer.

The enzyme catalyses (2S)-2-phospholactate + GTP + H(+) = (2S)-lactyl-2-diphospho-5'-guanosine + diphosphate. It participates in cofactor biosynthesis; coenzyme F420 biosynthesis. Its function is as follows. Guanylyltransferase that catalyzes the activation of (2S)-2-phospholactate (2-PL) as (2S)-lactyl-2-diphospho-5'-guanosine, via the condensation of 2-PL with GTP. It is involved in the biosynthesis of coenzyme F420, a hydride carrier cofactor. This Methanosarcina barkeri (strain Fusaro / DSM 804) protein is 2-phospho-L-lactate guanylyltransferase.